The sequence spans 257 residues: Transcriptional regulatory protein TrcR (257 aa).

Residues 33–147 (RVLLVDDEPA…ELVARLRGLL (115 aa)) enclose the Response regulatory domain. Aspartate 82 is modified (4-aspartylphosphate). Positions 158 to 255 (DEALRVGDLT…VRGIGYMLRP (98 aa)) form a DNA-binding region, ompR/PhoB-type.

Phosphorylated by TrcS.

In terms of biological role, member of the two-component regulatory system TrcS/TrcR. Activates its own expression by binding specifically to the AT-rich sequence of the trcR promoter region. Also negatively regulates the expression of Rv1057 by binding to an AT-rich sequences within the Rv1057 upstream sequence. The TrcR-TrcS regulatory system may act as a transition regulatory system involved in adapting to an intracellular environment and transitioning from latency to reactivation. The protein is Transcriptional regulatory protein TrcR of Mycobacterium tuberculosis (strain ATCC 25618 / H37Rv).